A 383-amino-acid chain; its full sequence is Na(+)/H(+) antiporter NhaA (383 aa).

11 consecutive transmembrane segments (helical) span residues 21-41, 56-76, 94-114, 123-143, 152-172, 175-195, 202-222, 258-278, 287-307, 326-346, and 355-375; these read AAGVMLMAASAIGMVFANSIW, LTMRGWINDALMALFFLLAGL, LLPGVAAIGGMVVPAIIYVAF, GWAIPTATDIAFALGVLALAG, VFLTALAIVDDLGAVIVIALF, GTLSVLPGAGVAAILGLLLML, TLFPYLLAGVPLWWLTLKSGI, FVILPLFGFANAGISLHGVTV, LGVGAALMLGKPLGVLGAVSI, IGIAFLCGIGFTMSLFIAILA, and QIKLGILSGSMLSGLCGYILL.

This sequence belongs to the NhaA Na(+)/H(+) (TC 2.A.33) antiporter family.

It is found in the cell inner membrane. It carries out the reaction Na(+)(in) + 2 H(+)(out) = Na(+)(out) + 2 H(+)(in). Its function is as follows. Na(+)/H(+) antiporter that extrudes sodium in exchange for external protons. The polypeptide is Na(+)/H(+) antiporter NhaA (Granulibacter bethesdensis (strain ATCC BAA-1260 / CGDNIH1)).